A 254-amino-acid polypeptide reads, in one-letter code: Alcohol dehydrogenase 2 (254 aa).

Residue 10–33 (FVAGLGGIGFDTSREIVKSGPKNL) participates in NAD(+) binding. A substrate-binding site is contributed by Ser-138. Tyr-151 functions as the Proton acceptor in the catalytic mechanism.

The protein belongs to the short-chain dehydrogenases/reductases (SDR) family. As to quaternary structure, homodimer.

The catalysed reaction is a primary alcohol + NAD(+) = an aldehyde + NADH + H(+). The enzyme catalyses a secondary alcohol + NAD(+) = a ketone + NADH + H(+). The sequence is that of Alcohol dehydrogenase 2 (Adh2) from Drosophila wheeleri (Fruit fly).